The primary structure comprises 256 residues: MNDQRKGSDAEPTTHFGYKNVPESQKAEKVAEVFHSVAAKYDLMNDLLSGGMHRLWKRFAIELSGVRTGNRVLDIAGGTGDLTRKFSNLVGPTGQVVLADINASMLKVGRDRLLDLGVSGNVEFVQADAEKLPFPDNHFDCVTIAFGLRNVTHKEDALRSMLRVLKPGGRLLVLEFSKPTNKLMSKAYDAYSFAFMPLMGKLVTNDSESYRYLAESIRMHPNQETLKSMMVDAGFDRVTYHNMTAGVVALHRGIKP.

S-adenosyl-L-methionine is bound by residues T79, D100, and 128–129 (DA).

Belongs to the class I-like SAM-binding methyltransferase superfamily. MenG/UbiE family.

The catalysed reaction is a 2-demethylmenaquinol + S-adenosyl-L-methionine = a menaquinol + S-adenosyl-L-homocysteine + H(+). It carries out the reaction a 2-methoxy-6-(all-trans-polyprenyl)benzene-1,4-diol + S-adenosyl-L-methionine = a 5-methoxy-2-methyl-3-(all-trans-polyprenyl)benzene-1,4-diol + S-adenosyl-L-homocysteine + H(+). The protein operates within quinol/quinone metabolism; menaquinone biosynthesis; menaquinol from 1,4-dihydroxy-2-naphthoate: step 2/2. It functions in the pathway cofactor biosynthesis; ubiquinone biosynthesis. In terms of biological role, methyltransferase required for the conversion of demethylmenaquinol (DMKH2) to menaquinol (MKH2) and the conversion of 2-polyprenyl-6-methoxy-1,4-benzoquinol (DDMQH2) to 2-polyprenyl-3-methyl-6-methoxy-1,4-benzoquinol (DMQH2). This is Ubiquinone/menaquinone biosynthesis C-methyltransferase UbiE from Pseudomonas syringae pv. tomato (strain ATCC BAA-871 / DC3000).